A 288-amino-acid polypeptide reads, in one-letter code: MAEKKQWHETLHDQFGQYFAVDNVLYHEKTDHQDLIIFENAAFGRVMALDGVVQTTERDEFIYHEMMTHVPLLAHGHAKHVLIIGGGDGAMLREVTRHKNVESITMVEIDAGVVSFCRQYLPNHNAGSYDDPRFQLVIDDGVNFVNQTSQTFDVIISDCTDPIGPGESLFTSAFYEGCKRCLNPGGIFVAQNGVCFLQQEEAIDSHRKLSHYFSDVGFYQAAIPTYYGGIMTFAWATDNDALRHLSTEIIQARFLASGLKCRYYNPAIHTAAFALPQYLQDALASQPS.

The PABS domain occupies glutamate 9–aspartate 238. Glutamine 33 provides a ligand contact to S-methyl-5'-thioadenosine. The spermidine site is built by histidine 64 and aspartate 88. S-methyl-5'-thioadenosine-binding positions include glutamate 108 and aspartate 140–glycine 141. Aspartate 158 functions as the Proton acceptor in the catalytic mechanism. Aspartate 158 to aspartate 161 contributes to the spermidine binding site. Proline 165 provides a ligand contact to S-methyl-5'-thioadenosine.

The protein belongs to the spermidine/spermine synthase family. As to quaternary structure, homodimer or homotetramer.

It localises to the cytoplasm. It catalyses the reaction S-adenosyl 3-(methylsulfanyl)propylamine + putrescine = S-methyl-5'-thioadenosine + spermidine + H(+). It functions in the pathway amine and polyamine biosynthesis; spermidine biosynthesis; spermidine from putrescine: step 1/1. In terms of biological role, catalyzes the irreversible transfer of a propylamine group from the amino donor S-adenosylmethioninamine (decarboxy-AdoMet) to putrescine (1,4-diaminobutane) to yield spermidine. The polypeptide is Polyamine aminopropyltransferase (Shigella flexneri serotype 5b (strain 8401)).